The primary structure comprises 533 residues: Beta-xylosidase (533 aa).

Asp-14 acts as the Proton acceptor in catalysis. Glu-186 functions as the Proton donor in the catalytic mechanism.

This sequence belongs to the glycosyl hydrolase 43 family. In terms of assembly, homodimer.

The protein resides in the cell membrane. It carries out the reaction Hydrolysis of (1-&gt;4)-beta-D-xylans, to remove successive D-xylose residues from the non-reducing termini.. In Bacillus subtilis (strain 168), this protein is Beta-xylosidase (xynB).